The primary structure comprises 136 residues: UPF0275 protein PM0493 (136 aa).

The protein belongs to the UPF0275 family.

This Pasteurella multocida (strain Pm70) protein is UPF0275 protein PM0493.